Consider the following 336-residue polypeptide: Holliday junction branch migration complex subunit RuvB (336 aa).

The large ATPase domain (RuvB-L) stretch occupies residues 4–184 (SDRLISSQSI…FGIVQRLEYY (181 aa)). Residues isoleucine 23, arginine 24, glycine 65, lysine 68, threonine 69, threonine 70, 131-133 (EDY), arginine 174, tyrosine 184, and arginine 221 contribute to the ATP site. Residue threonine 69 coordinates Mg(2+). The small ATPAse domain (RuvB-S) stretch occupies residues 185 to 255 (SVDSLTKIVA…MAQQALEMLE (71 aa)). The head domain (RuvB-H) stretch occupies residues 258 to 336 (QHGFDLMDRK…HFGFSAIEQE (79 aa)). The DNA site is built by arginine 313 and arginine 318.

It belongs to the RuvB family. In terms of assembly, homohexamer. Forms an RuvA(8)-RuvB(12)-Holliday junction (HJ) complex. HJ DNA is sandwiched between 2 RuvA tetramers; dsDNA enters through RuvA and exits via RuvB. An RuvB hexamer assembles on each DNA strand where it exits the tetramer. Each RuvB hexamer is contacted by two RuvA subunits (via domain III) on 2 adjacent RuvB subunits; this complex drives branch migration. In the full resolvosome a probable DNA-RuvA(4)-RuvB(12)-RuvC(2) complex forms which resolves the HJ.

It localises to the cytoplasm. The enzyme catalyses ATP + H2O = ADP + phosphate + H(+). The RuvA-RuvB-RuvC complex processes Holliday junction (HJ) DNA during genetic recombination and DNA repair, while the RuvA-RuvB complex plays an important role in the rescue of blocked DNA replication forks via replication fork reversal (RFR). RuvA specifically binds to HJ cruciform DNA, conferring on it an open structure. The RuvB hexamer acts as an ATP-dependent pump, pulling dsDNA into and through the RuvAB complex. RuvB forms 2 homohexamers on either side of HJ DNA bound by 1 or 2 RuvA tetramers; 4 subunits per hexamer contact DNA at a time. Coordinated motions by a converter formed by DNA-disengaged RuvB subunits stimulates ATP hydrolysis and nucleotide exchange. Immobilization of the converter enables RuvB to convert the ATP-contained energy into a lever motion, pulling 2 nucleotides of DNA out of the RuvA tetramer per ATP hydrolyzed, thus driving DNA branch migration. The RuvB motors rotate together with the DNA substrate, which together with the progressing nucleotide cycle form the mechanistic basis for DNA recombination by continuous HJ branch migration. Branch migration allows RuvC to scan DNA until it finds its consensus sequence, where it cleaves and resolves cruciform DNA. The protein is Holliday junction branch migration complex subunit RuvB of Legionella pneumophila (strain Paris).